A 620-amino-acid polypeptide reads, in one-letter code: Long-chain fatty acid transport protein 2 (620 aa).

The Lumenal segment spans residues 1-4 (MLPV). Residues 5-27 (LYTGLAGLLLLPLLLTCCCPYLL) form a helical membrane-spanning segment. Residues 28–106 (QDVRFFLQLA…DHLGLRQGDC (79 aa)) lie on the Cytoplasmic side of the membrane. Residues 107-127 (VALFMGNEPAYVWLWLGLLKL) traverse the membrane as a helical segment. The Lumenal segment spans residues 128-267 (GCPMACLNYN…DVIYTTMPLY (140 aa)). 222–233 (YIYTSGTTGLPK) contacts AMP. The chain crosses the membrane as a helical span at residues 268–288 (HSAALMIGLHGCIVVGATFAL). The Cytoplasmic segment spans residues 289-620 (RSKFSASQFW…NAIIDKTLKL (332 aa)). An N6-acetyllysine modification is found at Lys-291. Position 577 is a phosphothreonine (Thr-577).

Belongs to the ATP-dependent AMP-binding enzyme family. In terms of tissue distribution, liver and kidney (at protein level).

The protein localises to the endoplasmic reticulum membrane. It is found in the peroxisome membrane. It localises to the cell membrane. Its subcellular location is the microsome. The enzyme catalyses a fatty acid(in) = a fatty acid(out). The catalysed reaction is (9Z)-octadecenoate(out) = (9Z)-octadecenoate(in). It carries out the reaction a long-chain fatty acid + ATP + CoA = a long-chain fatty acyl-CoA + AMP + diphosphate. It catalyses the reaction (5Z,8Z,11Z,14Z)-eicosatetraenoate + ATP + CoA = (5Z,8Z,11Z,14Z)-eicosatetraenoyl-CoA + AMP + diphosphate. The enzyme catalyses (9Z,12Z,15Z)-octadecatrienoate + ATP + CoA = (9Z,12Z,15Z)-octadecatrienoyl-CoA + AMP + diphosphate. The catalysed reaction is hexadecanoate + ATP + CoA = hexadecanoyl-CoA + AMP + diphosphate. It carries out the reaction (9Z)-octadecenoate + ATP + CoA = (9Z)-octadecenoyl-CoA + AMP + diphosphate. It catalyses the reaction 2,6,10,14-tetramethylpentadecanoate + ATP + CoA = pristanoyl-CoA + AMP + diphosphate. The enzyme catalyses (E)-hexadec-2-enoate + ATP + CoA = (2E)-hexadecenoyl-CoA + AMP + diphosphate. The catalysed reaction is 3,7,11,15-tetramethylhexadecanoate + ATP + CoA = phytanoyl-CoA + AMP + diphosphate. It carries out the reaction a very long-chain fatty acid + ATP + CoA = a very long-chain fatty acyl-CoA + AMP + diphosphate. It catalyses the reaction tetracosanoate + ATP + CoA = tetracosanoyl-CoA + AMP + diphosphate. The enzyme catalyses (4Z,7Z,10Z,13Z,16Z,19Z)-docosahexaenoate + ATP + CoA = (4Z,7Z,10Z,13Z,16Z,19Z)-docosahexaenoyl-CoA + AMP + diphosphate. The catalysed reaction is (25R)-3alpha,7alpha,12alpha-trihydroxy-5beta-cholestan-26-oate + ATP + CoA = (25R)-3alpha,7alpha,12alpha-trihydroxy-5beta-cholestan-26-oyl-CoA + AMP + diphosphate. In terms of biological role, mediates the import of long-chain fatty acids (LCFA) into the cell by facilitating their transport across cell membranes, playing an important role in hepatic fatty acid uptake. Also functions as an acyl-CoA ligase catalyzing the ATP-dependent formation of fatty acyl-CoA using LCFA and very-long-chain fatty acids (VLCFA) as substrates, which prevents fatty acid efflux from cells and might drive more fatty acid uptake. Plays a pivotal role in regulating available LCFA substrates from exogenous sources in tissues undergoing high levels of beta-oxidation or triglyceride synthesis. Can also activate branched-chain fatty acids such as phytanic acid and pristanic acid. May contribute to the synthesis of sphingosine-1-phosphate. Does not activate C24 bile acids, cholate and chenodeoxycholate. In vitro, activates 3-alpha,7-alpha,12-alpha-trihydroxy-5-beta-cholestanate (THCA), the C27 precursor of cholic acid deriving from the de novo synthesis from cholesterol. However, it is not critical for THCA activation and bile synthesis in vivo. This is Long-chain fatty acid transport protein 2 (Slc27a2) from Rattus norvegicus (Rat).